The sequence spans 201 residues: 3-isopropylmalate dehydratase small subunit (201 aa).

The protein belongs to the LeuD family. LeuD type 1 subfamily. Heterodimer of LeuC and LeuD.

The enzyme catalyses (2R,3S)-3-isopropylmalate = (2S)-2-isopropylmalate. It functions in the pathway amino-acid biosynthesis; L-leucine biosynthesis; L-leucine from 3-methyl-2-oxobutanoate: step 2/4. Functionally, catalyzes the isomerization between 2-isopropylmalate and 3-isopropylmalate, via the formation of 2-isopropylmaleate. The polypeptide is 3-isopropylmalate dehydratase small subunit (Escherichia coli O45:K1 (strain S88 / ExPEC)).